The chain runs to 215 residues: Adenylate kinase (215 aa).

14–19 (GVGKGT) serves as a coordination point for ATP. The tract at residues 34-63 (STGDIFRSVMQEQGALSQTLAHYMNQGLYV) is NMP. Residues threonine 35, arginine 40, 61 to 63 (LYV), 91 to 94 (GYPR), and glutamine 98 contribute to the AMP site. The tract at residues 128 to 165 (NRLVCPSCGSVYNKQSKPPLKANQCDRCHATLQARNDD) is LID. Arginine 129 contributes to the ATP binding site. 2 residues coordinate Zn(2+): cysteine 132 and cysteine 135. ATP is bound at residue 138–139 (VY). Cysteine 152 and cysteine 155 together coordinate Zn(2+). AMP is bound by residues arginine 162 and arginine 173. Glutamine 211 contributes to the ATP binding site.

This sequence belongs to the adenylate kinase family. In terms of assembly, monomer.

It localises to the cytoplasm. It carries out the reaction AMP + ATP = 2 ADP. It participates in purine metabolism; AMP biosynthesis via salvage pathway; AMP from ADP: step 1/1. Functionally, catalyzes the reversible transfer of the terminal phosphate group between ATP and AMP. Plays an important role in cellular energy homeostasis and in adenine nucleotide metabolism. This Mycoplasma pneumoniae (strain ATCC 29342 / M129 / Subtype 1) (Mycoplasmoides pneumoniae) protein is Adenylate kinase.